A 280-amino-acid polypeptide reads, in one-letter code: Ribosomal RNA large subunit methyltransferase J (280 aa).

S-adenosyl-L-methionine is bound by residues His19, His42, Ser100, Glu118, 143-144, and Asp164; that span reads DG. Asp164 serves as the catalytic Proton acceptor.

It belongs to the RlmJ family. In terms of assembly, monomer.

The enzyme catalyses adenosine(2030) in 23S rRNA + S-adenosyl-L-methionine = N(6)-methyladenosine(2030) in 23S rRNA + S-adenosyl-L-homocysteine + H(+). In terms of biological role, specifically methylates the adenine in position 2030 of 23S rRNA. Nascent 23S rRNA seems to be the natural substrate. Appears to be not necessary for ribosome assembly. Required for the utilization of extracellular DNA as the sole source of carbon and energy. The chain is Ribosomal RNA large subunit methyltransferase J from Escherichia coli (strain K12).